The primary structure comprises 227 residues: Homeobox-leucine zipper protein ATHB-54 (227 aa).

The homeobox DNA-binding region spans 65-124 (EITKKRKLTPIQLRLLEESFEEEKRLEPDRKLWLAEKLGLQPSQVAVWFQNRRARYKTKQ). Positions 125–153 (LEHDCDSLKASYAKLKTDWDILFVQNQTL) are leucine-zipper. The tract at residues 175–198 (IERKRLGEEGSSVKSDNTQYSEEE) is disordered.

It belongs to the HD-ZIP homeobox family. Class I subfamily. Predominantly expressed in flowers and siliques.

The protein localises to the nucleus. Functionally, probable transcription factor. In Arabidopsis thaliana (Mouse-ear cress), this protein is Homeobox-leucine zipper protein ATHB-54 (ATHB-54).